The chain runs to 247 residues: MSKQPDRLFAQPLEQVPDFVFNEDVVRVFPDMIKRSVPGYPTIVENLGVLAARFAQPNTALYDLGASLGAVTQSLRRHVRSDGCRVIAVDNSAAMVERCRQYLTAQDSMFQELLPVQVLEADILALPFEPASVVAMNFTLQFIAPDQRLELLGRIRQALLPGGALILSEKLRFADEQEQDLLNELHLDFKRANGYSELEIAQKRSAIENVMRPDTLEAHQERLRAAGFSKVVPWFQCLNFASLIALP.

Residues Tyr40, 65 to 67 (GAS), 90 to 91 (DN), 122 to 123 (DI), Asn137, and Arg204 each bind S-adenosyl-L-methionine.

Belongs to the class I-like SAM-binding methyltransferase superfamily. Cx-SAM synthase family. In terms of assembly, homodimer.

It catalyses the reaction prephenate + S-adenosyl-L-methionine = carboxy-S-adenosyl-L-methionine + 3-phenylpyruvate + H2O. Its function is as follows. Catalyzes the conversion of S-adenosyl-L-methionine (SAM) to carboxy-S-adenosyl-L-methionine (Cx-SAM). This Pseudomonas putida (strain GB-1) protein is Carboxy-S-adenosyl-L-methionine synthase.